The following is a 138-amino-acid chain: Bis(5'-nucleosyl)-tetraphosphatase [asymmetrical] (138 aa).

The region spanning 1–132 (MVVKAAGLVI…EMGSLLRKFS (132 aa)) is the Nudix hydrolase domain. The short motif at 37-58 (GHVDPGEDEWQAAIRETKEEAN) is the Nudix box element.

The protein belongs to the Nudix hydrolase family. As to quaternary structure, monomer. The cofactor is Mg(2+). It depends on Co(2+) as a cofactor. Mn(2+) serves as cofactor. Zn(2+) is required as a cofactor. Requires Ca(2+) as cofactor.

The catalysed reaction is P(1),P(4)-bis(5'-adenosyl) tetraphosphate + H2O = AMP + ATP + 2 H(+). Its function is as follows. Asymmetrically hydrolyzes Ap4A to yield AMP and ATP. In Caenorhabditis elegans, this protein is Bis(5'-nucleosyl)-tetraphosphatase [asymmetrical] (ndx-4).